A 281-amino-acid chain; its full sequence is Nucleotide-binding protein DNO_0399 (281 aa).

6 to 13 (GMSGAGKS) contributes to the ATP binding site. A GTP-binding site is contributed by 55-58 (DARN).

The protein belongs to the RapZ-like family.

Displays ATPase and GTPase activities. The polypeptide is Nucleotide-binding protein DNO_0399 (Dichelobacter nodosus (strain VCS1703A)).